Consider the following 168-residue polypeptide: Crossover junction endodeoxyribonuclease RuvC (168 aa).

Catalysis depends on residues D7, E66, and D138. Mg(2+) is bound by residues D7, E66, and D138.

It belongs to the RuvC family. In terms of assembly, homodimer which binds Holliday junction (HJ) DNA. The HJ becomes 2-fold symmetrical on binding to RuvC with unstacked arms; it has a different conformation from HJ DNA in complex with RuvA. In the full resolvosome a probable DNA-RuvA(4)-RuvB(12)-RuvC(2) complex forms which resolves the HJ. Mg(2+) serves as cofactor.

It is found in the cytoplasm. The enzyme catalyses Endonucleolytic cleavage at a junction such as a reciprocal single-stranded crossover between two homologous DNA duplexes (Holliday junction).. In terms of biological role, the RuvA-RuvB-RuvC complex processes Holliday junction (HJ) DNA during genetic recombination and DNA repair. Endonuclease that resolves HJ intermediates. Cleaves cruciform DNA by making single-stranded nicks across the HJ at symmetrical positions within the homologous arms, yielding a 5'-phosphate and a 3'-hydroxyl group; requires a central core of homology in the junction. The consensus cleavage sequence is 5'-(A/T)TT(C/G)-3'. Cleavage occurs on the 3'-side of the TT dinucleotide at the point of strand exchange. HJ branch migration catalyzed by RuvA-RuvB allows RuvC to scan DNA until it finds its consensus sequence, where it cleaves and resolves the cruciform DNA. This is Crossover junction endodeoxyribonuclease RuvC from Cereibacter sphaeroides (strain ATCC 17029 / ATH 2.4.9) (Rhodobacter sphaeroides).